The primary structure comprises 91 residues: Large ribosomal subunit protein bL27 (91 aa).

This sequence belongs to the bacterial ribosomal protein bL27 family.

The polypeptide is Large ribosomal subunit protein bL27 (Chromobacterium violaceum (strain ATCC 12472 / DSM 30191 / JCM 1249 / CCUG 213 / NBRC 12614 / NCIMB 9131 / NCTC 9757 / MK)).